We begin with the raw amino-acid sequence, 239 residues long: MVIKAQSPAGFAEEYIIESIWNNRFPPGSILPAERELSELIGVTRTTLREVLQRLARDGWLTIQHGKPTKINNFWETSGLNILETLARLDHDSVPQLIDNLLAVRTNIAAIFIRTALRHNPEKVRDVLTQSSAVDDSAEAFAQLDYNVFRGLAFASGNPIYGLILNGLKGLYIRVGRYYFSNPEARKLAVNFYGRLEALRSEELYDQVMDVVRHYGKESGAIWHSMQSAIPRDIAEVRR.

In terms of domain architecture, HTH gntR-type spans 6 to 74; the sequence is QSPAGFAEEY…HGKPTKINNF (69 aa). Residues 34-53 constitute a DNA-binding region (H-T-H motif); sequence ERELSELIGVTRTTLREVLQ.

Homodimer.

It is found in the cytoplasm. Multifunctional regulator of fatty acid metabolism. In Pectobacterium atrosepticum (strain SCRI 1043 / ATCC BAA-672) (Erwinia carotovora subsp. atroseptica), this protein is Fatty acid metabolism regulator protein.